Consider the following 120-residue polypeptide: NAD(P)H-quinone oxidoreductase subunit 3, chloroplastic (120 aa).

3 consecutive transmembrane segments (helical) span residues 9–29 (IFWAFLMISSVIPILAFLISG), 64–84 (MFALVFVVFDVETVFLYPWAM), and 88–108 (VLGVSAFIEALIFVLIPIVGS).

The protein belongs to the complex I subunit 3 family. In terms of assembly, NDH is composed of at least 16 different subunits, 5 of which are encoded in the nucleus.

It is found in the plastid. The protein localises to the chloroplast thylakoid membrane. The catalysed reaction is a plastoquinone + NADH + (n+1) H(+)(in) = a plastoquinol + NAD(+) + n H(+)(out). It catalyses the reaction a plastoquinone + NADPH + (n+1) H(+)(in) = a plastoquinol + NADP(+) + n H(+)(out). NDH shuttles electrons from NAD(P)H:plastoquinone, via FMN and iron-sulfur (Fe-S) centers, to quinones in the photosynthetic chain and possibly in a chloroplast respiratory chain. The immediate electron acceptor for the enzyme in this species is believed to be plastoquinone. Couples the redox reaction to proton translocation, and thus conserves the redox energy in a proton gradient. The polypeptide is NAD(P)H-quinone oxidoreductase subunit 3, chloroplastic (Illicium oligandrum (Star anise)).